Reading from the N-terminus, the 326-residue chain is Metallophosphoesterase domain-containing protein 1 (326 aa).

Belongs to the UPF0046 family.

In terms of biological role, may have metallophosphoesterase activity (in vitro). This Mus musculus (Mouse) protein is Metallophosphoesterase domain-containing protein 1 (Mpped1).